The chain runs to 421 residues: Granaticin polyketide putative beta-ketoacyl synthase 1 (421 aa).

In terms of domain architecture, Ketosynthase family 3 (KS3) spans 2–416; that stretch reads TRRVVITGVG…GFQSAMVLHR (415 aa). Residues cysteine 169, histidine 309, and histidine 346 each act as for beta-ketoacyl synthase activity in the active site.

It belongs to the thiolase-like superfamily. Beta-ketoacyl-ACP synthases family.

The protein operates within antibiotic biosynthesis; granaticin biosynthesis. This is Granaticin polyketide putative beta-ketoacyl synthase 1 (gra-orf1) from Streptomyces violaceoruber.